The sequence spans 271 residues: Pyrroline-5-carboxylate reductase (271 aa).

This sequence belongs to the pyrroline-5-carboxylate reductase family.

It is found in the cytoplasm. It catalyses the reaction L-proline + NADP(+) = (S)-1-pyrroline-5-carboxylate + NADPH + 2 H(+). The enzyme catalyses L-proline + NAD(+) = (S)-1-pyrroline-5-carboxylate + NADH + 2 H(+). It functions in the pathway amino-acid biosynthesis; L-proline biosynthesis; L-proline from L-glutamate 5-semialdehyde: step 1/1. Functionally, catalyzes the reduction of 1-pyrroline-5-carboxylate (PCA) to L-proline. This is Pyrroline-5-carboxylate reductase from Staphylococcus saprophyticus subsp. saprophyticus (strain ATCC 15305 / DSM 20229 / NCIMB 8711 / NCTC 7292 / S-41).